A 132-amino-acid polypeptide reads, in one-letter code: Monothiol glutaredoxin-S9 (132 aa).

The disordered stretch occupies residues 16–38; it reads ASRPATAAAAPPPPPPRGEEEEV. The region spanning 35-131 is the Glutaredoxin domain; the sequence is EEEVRRAVAE…PILKEAGALW (97 aa). Cysteine 55 provides a ligand contact to [2Fe-2S] cluster. Positions 129–132 match the Responsive for interaction with TGA factors motif; the sequence is ALWL.

The protein belongs to the glutaredoxin family. CC-type subfamily.

It localises to the cytoplasm. It is found in the nucleus. In terms of biological role, may only reduce GSH-thiol disulfides, but not protein disulfides. This Oryza sativa subsp. japonica (Rice) protein is Monothiol glutaredoxin-S9 (GRXS9).